Consider the following 1130-residue polypeptide: BTB/POZ domain-containing protein 7 (1130 aa).

Positions 1–10 are enriched in polar residues; it reads MGANASNYPH. The disordered stretch occupies residues 1-24; it reads MGANASNYPHSCSPRVGGNSQAQQ. G2 carries the N-myristoyl glycine lipid modification. 2 consecutive BTB domains span residues 142–211 and 247–341; these read TDVD…GMED and YDVV…DLSV. The 67-residue stretch at 413–479 folds into the BACK domain; that stretch reads YGSKWVHRQA…WGEHQLMKRI (67 aa). A Phosphoserine modification is found at S722. 2 disordered regions span residues 898–1050 and 1062–1130; these read SEAG…PAHV and FGLT…KSAL. Composition is skewed to basic and acidic residues over residues 923-935 and 996-1005; these read PTLEQKADGRENQ and KKQEDPRREY. A Phosphoserine modification is found at S1008. The segment covering 1063 to 1075 has biased composition (polar residues); it reads GLTSNRPPSHSAC. Basic and acidic residues-rich tracts occupy residues 1080-1090 and 1101-1112; these read LEERSSRRLTD and RNADLERGDSIS.

As to expression, specifically expressed in embryonic epithelia.

The protein localises to the nucleus. Functionally, acts as a mediator of epithelial dynamics and organ branching by promoting cleft progression. Induced following accumulation of fibronectin in forming clefts, leading to local expression of the cell-scattering SNAIL2 and suppression of E-cadherin levels, thereby altering cell morphology and reducing cell-cell adhesion. This stimulates cell separation at the base of forming clefts by local, dynamic intercellular gap formation and promotes cleft progression. This is BTB/POZ domain-containing protein 7 (Btbd7) from Mus musculus (Mouse).